Here is a 214-residue protein sequence, read N- to C-terminus: NADH-quinone oxidoreductase subunit C (214 aa).

It belongs to the complex I 30 kDa subunit family. In terms of assembly, NDH-1 is composed of 14 different subunits. Subunits NuoB, C, D, E, F, and G constitute the peripheral sector of the complex.

It is found in the cell inner membrane. The catalysed reaction is a quinone + NADH + 5 H(+)(in) = a quinol + NAD(+) + 4 H(+)(out). Its function is as follows. NDH-1 shuttles electrons from NADH, via FMN and iron-sulfur (Fe-S) centers, to quinones in the respiratory chain. The immediate electron acceptor for the enzyme in this species is believed to be ubiquinone. Couples the redox reaction to proton translocation (for every two electrons transferred, four hydrogen ions are translocated across the cytoplasmic membrane), and thus conserves the redox energy in a proton gradient. The polypeptide is NADH-quinone oxidoreductase subunit C (Francisella tularensis subsp. mediasiatica (strain FSC147)).